The primary structure comprises 20 residues: Punein (20 aa).

The Barwin domain occupies 1-20 (YHYYNPEENHFCATWDASKP).

In terms of processing, the N-terminus is blocked.

This chain is Punein, found in Punica granatum (Pomegranate).